A 131-amino-acid chain; its full sequence is Profilin-2 (131 aa).

It belongs to the profilin family. Occurs in many kinds of cells as a complex with monomeric actin in a 1:1 ratio.

It is found in the cytoplasm. It localises to the cytoskeleton. Functionally, binds to actin and affects the structure of the cytoskeleton. At high concentrations, profilin prevents the polymerization of actin, whereas it enhances it at low concentrations. By binding to PIP2, it inhibits the formation of IP3 and DG. The polypeptide is Profilin-2 (Lilium longiflorum (Trumpet lily)).